The following is a 174-amino-acid chain: ATP-dependent protease subunit HslV (174 aa).

Thr2 is an active-site residue. Residues Gly157, Cys160, and Thr163 each contribute to the Na(+) site.

This sequence belongs to the peptidase T1B family. HslV subfamily. As to quaternary structure, a double ring-shaped homohexamer of HslV is capped on each side by a ring-shaped HslU homohexamer. The assembly of the HslU/HslV complex is dependent on binding of ATP.

It is found in the cytoplasm. The enzyme catalyses ATP-dependent cleavage of peptide bonds with broad specificity.. Allosterically activated by HslU binding. Protease subunit of a proteasome-like degradation complex believed to be a general protein degrading machinery. The chain is ATP-dependent protease subunit HslV from Yersinia enterocolitica serotype O:8 / biotype 1B (strain NCTC 13174 / 8081).